Reading from the N-terminus, the 778-residue chain is Arf-GAP with coiled-coil, ANK repeat and PH domain-containing protein 2 (778 aa).

Positions Met1–Arg226 constitute a BAR domain. The 96-residue stretch at Gly266–Ala361 folds into the PH domain. The disordered stretch occupies residues Ser371 to Ser391. Polar residues predominate over residues Ser379–Gly388. A phosphoserine mark is found at Ser384 and Ser387. The 122-residue stretch at Glu399–Ser520 folds into the Arf-GAP domain. A C4-type zinc finger spans residues Cys414–Cys437. The disordered stretch occupies residues Val518–Ser596. Ser521 bears the Phosphoserine mark. Over residues Glu524–Leu539 the composition is skewed to basic and acidic residues. Residues Val550–Ser569 show a composition bias toward polar residues. Phosphoserine is present on residues Ser581 and Ser584. 3 ANK repeats span residues Asn640–Gln669, Gln673–Ala702, and Glu706–Met735. Phosphotyrosine is present on Tyr742. Position 775 is a phosphoserine (Ser775).

As to quaternary structure, interacts with RAB35 (GTP-bound form); the interaction is direct and probably recruits ACAP2 to membranes. Interacts with MICALL1; the interaction is indirect through RAB35.

The protein localises to the endosome membrane. The protein resides in the cell membrane. GAP activity stimulated by phosphatidylinositol 4,5-bisphosphate (PIP2) and phosphatidic acid. GTPase-activating protein (GAP) for ADP ribosylation factor 6 (ARF6). Doesn't show GAP activity for RAB35. The protein is Arf-GAP with coiled-coil, ANK repeat and PH domain-containing protein 2 (ACAP2) of Oryctolagus cuniculus (Rabbit).